A 228-amino-acid chain; its full sequence is ATP phosphoribosyltransferase (228 aa).

The protein belongs to the ATP phosphoribosyltransferase family. Short subfamily. As to quaternary structure, heteromultimer composed of HisG and HisZ subunits.

The protein resides in the cytoplasm. The enzyme catalyses 1-(5-phospho-beta-D-ribosyl)-ATP + diphosphate = 5-phospho-alpha-D-ribose 1-diphosphate + ATP. It functions in the pathway amino-acid biosynthesis; L-histidine biosynthesis; L-histidine from 5-phospho-alpha-D-ribose 1-diphosphate: step 1/9. Catalyzes the condensation of ATP and 5-phosphoribose 1-diphosphate to form N'-(5'-phosphoribosyl)-ATP (PR-ATP). Has a crucial role in the pathway because the rate of histidine biosynthesis seems to be controlled primarily by regulation of HisG enzymatic activity. The protein is ATP phosphoribosyltransferase of Moorella thermoacetica (strain ATCC 39073 / JCM 9320).